A 237-amino-acid polypeptide reads, in one-letter code: (5-formylfuran-3-yl)methyl phosphate synthase (237 aa).

Residue K29 is the Schiff-base intermediate with substrate of the active site. Catalysis depends on K87, which acts as the Proton acceptor.

It belongs to the MfnB family.

It catalyses the reaction 2 D-glyceraldehyde 3-phosphate = 4-(hydroxymethyl)-2-furancarboxaldehyde phosphate + phosphate + 2 H2O. It functions in the pathway cofactor biosynthesis; methanofuran biosynthesis. In terms of biological role, catalyzes the formation of 4-(hydroxymethyl)-2-furancarboxaldehyde phosphate (4-HFC-P) from two molecules of glyceraldehyde-3-P (GA-3-P). This is (5-formylfuran-3-yl)methyl phosphate synthase from Methanopyrus kandleri (strain AV19 / DSM 6324 / JCM 9639 / NBRC 100938).